Consider the following 115-residue polypeptide: MNLERLNEIEKPLLHIVKHDVMPALGCTEPISLALASATAAKYLGKTPERIEAKVSPNLMKNGLGVAVPGTGMVGLPIAAAMKVLSNTILIELLIISVLLHQKVCSISTDRLSKL.

This sequence belongs to the UPF0597 family.

The polypeptide is UPF0597 protein HI_0855 (Haemophilus influenzae (strain ATCC 51907 / DSM 11121 / KW20 / Rd)).